A 455-amino-acid polypeptide reads, in one-letter code: L-serine dehydratase (455 aa).

Belongs to the iron-sulfur dependent L-serine dehydratase family. Requires [4Fe-4S] cluster as cofactor.

The catalysed reaction is L-serine = pyruvate + NH4(+). It participates in carbohydrate biosynthesis; gluconeogenesis. This is L-serine dehydratase (sdaA) from Helicobacter pylori (strain J99 / ATCC 700824) (Campylobacter pylori J99).